The chain runs to 178 residues: MLSFFKTLSTKRSAWFLLFSSALLLEAIALYFQHGMGLAPCVMCIYERVAILGIAFSGLLGLLYPSSMLLRLVALLIGLSSAIKGLMISITHLDLQLYPAPWKQCSAVAEFPETLPLDQWFPALFLPSGSCSEVTWQFLGFSMVQWIVVIFALYTLLLALIFISQVKRLKPKQRRLFH.

At 1–14 the chain is on the cytoplasmic side; sequence MLSFFKTLSTKRSA. The helical transmembrane segment at 15-31 threads the bilayer; it reads WFLLFSSALLLEAIALY. At 32 to 49 the chain is on the periplasmic side; that stretch reads FQHGMGLAPCVMCIYERV. An intrachain disulfide couples C41 to C44. The helical transmembrane segment at 50–65 threads the bilayer; the sequence is AILGIAFSGLLGLLYP. Residues 66 to 72 lie on the Cytoplasmic side of the membrane; that stretch reads SSMLLRL. A helical membrane pass occupies residues 73 to 90; the sequence is VALLIGLSSAIKGLMISI. At 91-145 the chain is on the periplasmic side; the sequence is THLDLQLYPAPWKQCSAVAEFPETLPLDQWFPALFLPSGSCSEVTWQFLGFSMVQ. Cysteines 105 and 131 form a disulfide. Residues 146-164 traverse the membrane as a helical segment; sequence WIVVIFALYTLLLALIFIS. The Cytoplasmic portion of the chain corresponds to 165–177; that stretch reads QVKRLKPKQRRLF.

Belongs to the DsbB family.

It localises to the cell inner membrane. In terms of biological role, required for disulfide bond formation in some periplasmic proteins. Acts by oxidizing the DsbA protein. This chain is Disulfide bond formation protein B, found in Pasteurella multocida (strain Pm70).